A 564-amino-acid polypeptide reads, in one-letter code: Septation ring formation regulator EzrA (564 aa).

The Extracellular segment spans residues 1–4 (MVLF). Residues 5 to 23 (IILAILVVILIAIGVLFYM) form a helical membrane-spanning segment. Over 24 to 564 (RSNKRNLIEK…KHIEEQVIKE (541 aa)) the chain is Cytoplasmic. 4 coiled-coil regions span residues 84–126 (VEEK…HQVT), 165–223 (EAAE…LIRE), 271–303 (MISR…YEVK), and 350–435 (VRQF…RRLL).

The protein belongs to the EzrA family.

The protein resides in the cell membrane. Functionally, negative regulator of FtsZ ring formation; modulates the frequency and position of FtsZ ring formation. Inhibits FtsZ ring formation at polar sites. Interacts either with FtsZ or with one of its binding partners to promote depolymerization. This Staphylococcus epidermidis (strain ATCC 35984 / DSM 28319 / BCRC 17069 / CCUG 31568 / BM 3577 / RP62A) protein is Septation ring formation regulator EzrA.